Consider the following 229-residue polypeptide: Cytidylate kinase (229 aa).

Position 12 to 20 (12 to 20 (GPSGSGKGT)) interacts with ATP.

Belongs to the cytidylate kinase family. Type 1 subfamily.

It is found in the cytoplasm. It catalyses the reaction CMP + ATP = CDP + ADP. The enzyme catalyses dCMP + ATP = dCDP + ADP. In Pseudomonas fluorescens (strain ATCC BAA-477 / NRRL B-23932 / Pf-5), this protein is Cytidylate kinase.